Reading from the N-terminus, the 175-residue chain is Adenine phosphoribosyltransferase (175 aa).

It belongs to the purine/pyrimidine phosphoribosyltransferase family. As to quaternary structure, homodimer.

It is found in the cytoplasm. It catalyses the reaction AMP + diphosphate = 5-phospho-alpha-D-ribose 1-diphosphate + adenine. Its pathway is purine metabolism; AMP biosynthesis via salvage pathway; AMP from adenine: step 1/1. Its function is as follows. Catalyzes a salvage reaction resulting in the formation of AMP, that is energically less costly than de novo synthesis. The protein is Adenine phosphoribosyltransferase of Synechococcus sp. (strain JA-2-3B'a(2-13)) (Cyanobacteria bacterium Yellowstone B-Prime).